We begin with the raw amino-acid sequence, 246 residues long: MQIDLNADLGEGCGNDEALLALISSANIACGWHAGDAATMLQTVKWALANKVSIGAHPSFPDRENFGRTEMQRDPEAVYADVLYQIGALDAMVRAQGGELAHVKPHGALYNMAVRDAKLCEAIVRAVRDYDSDLVFFGLANSQMIDIARAAGLRVKEEVFADRGYNPDGTLVKRGTPGALHEDEDVALNQTLSMVRDKQVRAIDGTWVPIRAETVCLHGDGAHALAFARRIRERLGAEGIAIRAGN.

The protein belongs to the LamB/PxpA family. Forms a complex composed of PxpA, PxpB and PxpC.

The enzyme catalyses 5-oxo-L-proline + ATP + 2 H2O = L-glutamate + ADP + phosphate + H(+). Its function is as follows. Catalyzes the cleavage of 5-oxoproline to form L-glutamate coupled to the hydrolysis of ATP to ADP and inorganic phosphate. In Cupriavidus metallidurans (strain ATCC 43123 / DSM 2839 / NBRC 102507 / CH34) (Ralstonia metallidurans), this protein is 5-oxoprolinase subunit A.